We begin with the raw amino-acid sequence, 305 residues long: Glycine--tRNA ligase alpha subunit (305 aa).

Belongs to the class-II aminoacyl-tRNA synthetase family. As to quaternary structure, tetramer of two alpha and two beta subunits.

It localises to the cytoplasm. It catalyses the reaction tRNA(Gly) + glycine + ATP = glycyl-tRNA(Gly) + AMP + diphosphate. The polypeptide is Glycine--tRNA ligase alpha subunit (Streptococcus thermophilus (strain CNRZ 1066)).